The primary structure comprises 181 residues: Cytochrome b6-f complex iron-sulfur subunit (181 aa).

The disordered stretch occupies residues 1–35; the sequence is MAQTGNFKSPARMSSLGQGAAPASAGAVTGGKPRE. 2 helical membrane passes run 53–73 and 114–134; these read VGGV…RYIV and GGSL…VHWD. Residues 85 to 178 enclose the Rieske domain; the sequence is LAVGPASDVP…VKIEDGKIVV (94 aa). The [2Fe-2S] cluster site is built by C124, H126, C142, and H145. Cysteines 129 and 144 form a disulfide.

This sequence belongs to the Rieske iron-sulfur protein family. The cofactor is [2Fe-2S] cluster.

It is found in the cell inner membrane. The catalysed reaction is 2 oxidized [plastocyanin] + a plastoquinol + 2 H(+)(in) = 2 reduced [plastocyanin] + a plastoquinone + 4 H(+)(out). Component of the green S-bacteria bc-complex which consists of the Rieske protein and cytochrome b subunit and which appears to lack a cytochrome c1-equivalent. This complex has a comparatively low redox potential. This chain is Cytochrome b6-f complex iron-sulfur subunit (petC), found in Chlorobaculum tepidum (strain ATCC 49652 / DSM 12025 / NBRC 103806 / TLS) (Chlorobium tepidum).